The sequence spans 927 residues: Protein LONGIFOLIA 1 (927 aa).

Disordered regions lie at residues 41–198, 210–257, 460–588, and 605–626; these read TGDE…EGRR, YDER…GHRR, AQKV…SDSN, and YERN…DLGM. Residues 86–114 show a composition bias toward low complexity; sequence SSESSSRLSFSSSPCSSSFSSADISTTAS. The segment covering 115–125 has biased composition (polar residues); the sequence is QFEQPGLSNGE. Positions 146-165 are enriched in basic and acidic residues; that stretch reads DIRELVRSSIHKETRTRDEE. The segment covering 182–193 has biased composition (polar residues); it reads KESSPSRNSNEW. Positions 210–226 are enriched in basic and acidic residues; that stretch reads YDERETRKTGAKLKETP. Over residues 232–245 the composition is skewed to low complexity; it reads SRSNSFRSARSSCS. Polar residues-rich tracts occupy residues 483-500 and 538-553; these read QTES…QSKS and NKNQ…TESA. Composition is skewed to basic and acidic residues over residues 569 to 584 and 605 to 616; these read SEDR…RSLR and YERNSDITEQHT.

In terms of assembly, interacts (via C-terminus) with TON1A and TON1B. As to expression, expressed in roots, petioles, leaf blades and floral organs.

The protein resides in the nucleus. Its function is as follows. In association with LNG2, regulates leaf morphology by promoting longitudinal polar cell elongation independently of ROT3. This is Protein LONGIFOLIA 1 (LNG1) from Arabidopsis thaliana (Mouse-ear cress).